The following is a 641-amino-acid chain: Bilirubin reductase (641 aa).

Residue Q96 participates in FMN binding. R167 acts as the Proton donor in catalysis. FMN is bound by residues K214, R295, and 317-318; that span reads GR. C341, C344, C348, and C360 together coordinate [4Fe-4S] cluster. Residues A391, E410, Q418, K428, and A455 each coordinate FAD.

It in the N-terminal section; belongs to the NADH:flavin oxidoreductase/NADH oxidase family. The cofactor is FAD. FMN serves as cofactor. Requires [4Fe-4S] cluster as cofactor.

It carries out the reaction urobilinogen + 4 A = (4Z,15Z)-bilirubin IXalpha + 4 AH2. The enzyme catalyses urobilinogen + 2 A = (4Z,15Z)-mesobilirubin IXalpha + 2 AH2. It participates in porphyrin-containing compound metabolism; protoheme degradation. In terms of biological role, bilirubin reductase that catalyzes reduction of mesobilirubin and/or bilirubin to urobilinogen, a key step during heme degradation. Urobilinogen then spontaneously degrades into urobilin, which gives urine its distinctive yellow color. In Mediterraneibacter gnavus (strain CC55_001C), this protein is Bilirubin reductase.